Reading from the N-terminus, the 416-residue chain is Multifunctional CCA protein (416 aa).

2 residues coordinate ATP: G8 and R11. CTP-binding residues include G8 and R11. Residues D21 and D23 each coordinate Mg(2+). ATP contacts are provided by R91, R137, and R140. R91, R137, and R140 together coordinate CTP. The HD domain occupies 228 to 329; it reads TGVHTLMVLA…VKIFDKADFW (102 aa).

Belongs to the tRNA nucleotidyltransferase/poly(A) polymerase family. Bacterial CCA-adding enzyme type 1 subfamily. In terms of assembly, monomer. Can also form homodimers and oligomers. Mg(2+) is required as a cofactor. Requires Ni(2+) as cofactor.

It catalyses the reaction a tRNA precursor + 2 CTP + ATP = a tRNA with a 3' CCA end + 3 diphosphate. The enzyme catalyses a tRNA with a 3' CCA end + 2 CTP + ATP = a tRNA with a 3' CCACCA end + 3 diphosphate. Its function is as follows. Catalyzes the addition and repair of the essential 3'-terminal CCA sequence in tRNAs without using a nucleic acid template. Adds these three nucleotides in the order of C, C, and A to the tRNA nucleotide-73, using CTP and ATP as substrates and producing inorganic pyrophosphate. tRNA 3'-terminal CCA addition is required both for tRNA processing and repair. Also involved in tRNA surveillance by mediating tandem CCA addition to generate a CCACCA at the 3' terminus of unstable tRNAs. While stable tRNAs receive only 3'-terminal CCA, unstable tRNAs are marked with CCACCA and rapidly degraded. This Shewanella baltica (strain OS223) protein is Multifunctional CCA protein.